The following is a 611-amino-acid chain: UvrABC system protein C (611 aa).

The GIY-YIG domain occupies 6–84 (NNPGVYRMFN…IKRSRPRFNV (79 aa)). A UVR domain is found at 194 to 229 (QSVKDHLAAAMQAASADLDFEHAAVYRDRLAALSHV).

The protein belongs to the UvrC family. As to quaternary structure, interacts with UvrB in an incision complex.

Its subcellular location is the cytoplasm. The UvrABC repair system catalyzes the recognition and processing of DNA lesions. UvrC both incises the 5' and 3' sides of the lesion. The N-terminal half is responsible for the 3' incision and the C-terminal half is responsible for the 5' incision. The protein is UvrABC system protein C of Brucella suis biovar 1 (strain 1330).